The sequence spans 296 residues: Ribonuclease MRP protein subunit POP4 (296 aa).

Disordered regions lie at residues 29 to 74 (LLQQ…VDPK) and 148 to 173 (SASG…KRLK). A compositionally biased stretch (basic and acidic residues) spans 36-56 (KNEKDKKGTSDVDVSMKESHQ). Over residues 57-66 (ADSLPTPSKT) the composition is skewed to polar residues. Positions 160–167 (SKRSKSRM) match the Nuclear localization signal motif. A compositionally biased stretch (basic residues) spans 163 to 173 (SKSRMSMKRLK).

This sequence belongs to the eukaryotic/archaeal RNase P protein component 1 family. In terms of assembly, component of nuclear RNase MRP complexes. Several subunits of RNase P are also part of the RNase MRP complex. RNase MRP consists of a catalytic RNA moiety and several protein subunits.

It is found in the nucleus. Functionally, component of the MRP ribonuclease complex, which cleaves pre-rRNA sequences. Required for rRNA maturation, including 5.8S rRNA processing. Seems not involved in tRNA maturation. This is Ribonuclease MRP protein subunit POP4 from Arabidopsis thaliana (Mouse-ear cress).